Here is a 151-residue protein sequence, read N- to C-terminus: Putative pre-16S rRNA nuclease (151 aa).

Belongs to the YqgF nuclease family.

The protein localises to the cytoplasm. Functionally, could be a nuclease involved in processing of the 5'-end of pre-16S rRNA. The chain is Putative pre-16S rRNA nuclease from Neisseria gonorrhoeae (strain ATCC 700825 / FA 1090).